The following is a 225-amino-acid chain: Lectin (225 aa).

As to quaternary structure, homotetramer.

Functionally, chitin-binding lectin. Agglutinates rabbit erythrocytes, but not human erythrocytes. The protein is Lectin of Vachellia farnesiana (Sweet acacia).